Reading from the N-terminus, the 377-residue chain is UPF0754 membrane protein lwe2241 (377 aa).

2 consecutive transmembrane segments (helical) span residues 1-21 (MSVL…GAMT) and 357-377 (YLGG…AIWI).

It belongs to the UPF0754 family.

It is found in the cell membrane. In Listeria welshimeri serovar 6b (strain ATCC 35897 / DSM 20650 / CCUG 15529 / CIP 8149 / NCTC 11857 / SLCC 5334 / V8), this protein is UPF0754 membrane protein lwe2241.